Here is a 63-residue protein sequence, read N- to C-terminus: Large ribosomal subunit protein bL28c (63 aa).

This sequence belongs to the bacterial ribosomal protein bL28 family.

The protein resides in the plastid. It is found in the chloroplast. In Porphyra purpurea (Red seaweed), this protein is Large ribosomal subunit protein bL28c (rpl28).